The primary structure comprises 407 residues: Glucose-1-phosphate adenylyltransferase 2 (407 aa).

Residues tyrosine 97, glycine 162, 177 to 178 (EK), and serine 195 each bind alpha-D-glucose 1-phosphate.

Belongs to the bacterial/plant glucose-1-phosphate adenylyltransferase family. Homotetramer.

The catalysed reaction is alpha-D-glucose 1-phosphate + ATP + H(+) = ADP-alpha-D-glucose + diphosphate. Its pathway is glycan biosynthesis; glycogen biosynthesis. In terms of biological role, involved in the biosynthesis of ADP-glucose, a building block required for the elongation reactions to produce glycogen. Catalyzes the reaction between ATP and alpha-D-glucose 1-phosphate (G1P) to produce pyrophosphate and ADP-Glc. The sequence is that of Glucose-1-phosphate adenylyltransferase 2 from Vibrio cholerae serotype O1 (strain ATCC 39315 / El Tor Inaba N16961).